The following is a 467-amino-acid chain: Asparagine--tRNA ligase (467 aa).

Belongs to the class-II aminoacyl-tRNA synthetase family. Homodimer.

It is found in the cytoplasm. The enzyme catalyses tRNA(Asn) + L-asparagine + ATP = L-asparaginyl-tRNA(Asn) + AMP + diphosphate + H(+). This chain is Asparagine--tRNA ligase, found in Legionella pneumophila (strain Lens).